The sequence spans 1273 residues: Probable methionine synthase (1273 aa).

The Hcy-binding domain maps to 7 to 327; that stretch reads FKELADIAKE…DHINAMYKAV (321 aa). Residues C249, C312, and C313 each coordinate Zn(2+). The Pterin-binding domain maps to 360–621; it reads FVNIGERCNV…IDKPLLQLLE (262 aa). A B12-binding N-terminal domain is found at 652–749; it reads KTDEWRNTSV…FMDAERQANI (98 aa). Residues E699, 772–776, H775, S820, T824, and A876 each bind methylcob(III)alamin; that span reads GDVHD. The B12-binding domain occupies 762–897; it reads QGTVVIATVK…DMTVRDAFLQ (136 aa). The AdoMet activation domain occupies 927–1273; sequence SLKDRRFVAL…LSPIIGYELD (347 aa). S-adenosyl-L-methionine contacts are provided by residues D977, R1171, and 1225–1226; that span reads YF.

The protein belongs to the vitamin-B12 dependent methionine synthase family. Methylcob(III)alamin serves as cofactor. Zn(2+) is required as a cofactor.

It catalyses the reaction (6S)-5-methyl-5,6,7,8-tetrahydrofolate + L-homocysteine = (6S)-5,6,7,8-tetrahydrofolate + L-methionine. Its pathway is amino-acid biosynthesis; L-methionine biosynthesis via de novo pathway; L-methionine from L-homocysteine (MetH route): step 1/1. Catalyzes the transfer of a methyl group from methyl-cobalamin to homocysteine, yielding enzyme-bound cob(I)alamin and methionine. Subsequently, remethylates the cofactor using methyltetrahydrofolate. The polypeptide is Probable methionine synthase (metr-1) (Caenorhabditis briggsae).